The chain runs to 1791 residues: Protein TIC 214 (1791 aa).

Helical transmembrane passes span 19–39 (IINSVVVVGLYYGFLTTFSIG), 68–88 (FIAGQLMMFISIYYAPLHLAL), 91–111 (PHTITVLALPYLLFHFFWNNH), 133–153 (VFLNNLIFQLFNHFILPSSML), 176–196 (VGWLIGHILFMKWVGLVLVWI), and 230–250 (IFSILLFITCVYYLGRIPSPI). Residues 257 to 271 (GTSETEERGGTKQDQ) show a composition bias toward basic and acidic residues. Disordered stretches follow at residues 257 to 278 (GTSETEERGGTKQDQEVSTEEA) and 1498 to 1521 (ADQGELESDNEKQRNPELALPNQE).

This sequence belongs to the TIC214 family. In terms of assembly, part of the Tic complex.

The protein resides in the plastid. Its subcellular location is the chloroplast inner membrane. Involved in protein precursor import into chloroplasts. May be part of an intermediate translocation complex acting as a protein-conducting channel at the inner envelope. This Aethionema grandiflorum (Persian stone-cress) protein is Protein TIC 214.